The sequence spans 184 residues: Ribosome-recycling factor (184 aa).

It belongs to the RRF family.

The protein localises to the cytoplasm. Its function is as follows. Responsible for the release of ribosomes from messenger RNA at the termination of protein biosynthesis. May increase the efficiency of translation by recycling ribosomes from one round of translation to another. This chain is Ribosome-recycling factor, found in Thermoanaerobacter pseudethanolicus (strain ATCC 33223 / 39E) (Clostridium thermohydrosulfuricum).